The following is a 229-amino-acid chain: UPF0758 protein Cagg_0777 (229 aa).

Residues 105–227 (PIRSPGDVAA…YVSLRERGIG (123 aa)) form the MPN domain. Zn(2+)-binding residues include histidine 176, histidine 178, and aspartate 189. The short motif at 176–189 (HNHPSGEATPSPED) is the JAMM motif element.

This sequence belongs to the UPF0758 family.

The polypeptide is UPF0758 protein Cagg_0777 (Chloroflexus aggregans (strain MD-66 / DSM 9485)).